Here is a 214-residue protein sequence, read N- to C-terminus: MAFDISVNASKTINALVYFSTQQNKLVIRNEVNDTHYTVEFDRDKVVDTFISYNRHNDTIEIRGVLPEETNIGCAVNTPVSMTYLYNKYSFKLILAEYIRHRNTISGNIYSALMTLDDLAIKQYGDIDLLFNEKLKVDSDSGLFDFVNFVKDMICCDSRIVVALSSLVSKHWELTNKKYRCMALANIYLIVFQYLSYLDYDTIYVSIYAGTLRA.

Belongs to the orthopoxvirus OPG176 family. As to quaternary structure, tetramer. Interacts with host MYD88, TRF4, TICAM2 and MAL.

BCL2-like protein which disrupts the host immune response by inhibiting the TLR4 signaling pathway leading to NF-kappa-B activation. Acts close to the plasma membrane and targets several host TIR-domain containing adapter proteins including MYD88, TIRAP, TRIF and TICAM2. In turn, blocks the host NF-kappa-B and TRIF-mediated IRF3 activation. This is Protein OPG176 (OPG176) from Homo sapiens (Human).